A 77-amino-acid polypeptide reads, in one-letter code: MQKRLHYSSLEINRRAEELIQHSANRYRITVQIANRAKQRRGLEASEDLDDLPLKPVIRAIIEMSDEVAQPELLADS.

This sequence belongs to the RNA polymerase subunit omega family. In terms of assembly, in cyanobacteria the RNAP catalytic core is composed of 2 alpha, 1 beta, 1 beta', 1 gamma and 1 omega subunit. When a sigma factor is associated with the core the holoenzyme is formed, which can initiate transcription.

The catalysed reaction is RNA(n) + a ribonucleoside 5'-triphosphate = RNA(n+1) + diphosphate. Functionally, promotes RNA polymerase assembly. Latches the N- and C-terminal regions of the beta' subunit thereby facilitating its interaction with the beta and alpha subunits. The sequence is that of DNA-directed RNA polymerase subunit omega from Thermosynechococcus vestitus (strain NIES-2133 / IAM M-273 / BP-1).